A 106-amino-acid chain; its full sequence is Glutaredoxin-1 (106 aa).

Alanine 1 carries the post-translational modification N-acetylalanine. The region spanning 2–105 (QEFVNSKIQP…ARLKEMGALR (104 aa)) is the Glutaredoxin domain. The residue at position 8 (lysine 8) is an N6-succinyllysine. 2 cysteine pairs are disulfide-bonded: cysteine 22/cysteine 25 and cysteine 78/cysteine 82.

Belongs to the glutaredoxin family.

It is found in the cytoplasm. Has a glutathione-disulfide oxidoreductase activity in the presence of NADPH and glutathione reductase. Reduces low molecular weight disulfides and proteins. This is Glutaredoxin-1 (GLRX) from Oryctolagus cuniculus (Rabbit).